The chain runs to 236 residues: tRNA (guanine-N(1)-)-methyltransferase (236 aa).

S-adenosyl-L-methionine-binding positions include Gly-112 and 132 to 137; that span reads VGDFIL.

This sequence belongs to the RNA methyltransferase TrmD family. As to quaternary structure, homodimer.

It is found in the cytoplasm. The catalysed reaction is guanosine(37) in tRNA + S-adenosyl-L-methionine = N(1)-methylguanosine(37) in tRNA + S-adenosyl-L-homocysteine + H(+). Functionally, specifically methylates guanosine-37 in various tRNAs. In Campylobacter curvus (strain 525.92), this protein is tRNA (guanine-N(1)-)-methyltransferase.